The chain runs to 155 residues: uncharacterized protein (155 aa).

2 disordered regions span residues 1 to 22 (MSSQKGNVTRSRPQKHQNTFTF) and 108 to 155 (PFNK…DTQA). N-acetylserine is present on Ser2. 3 positions are modified to phosphoserine: Ser136, Ser144, and Ser146. Over residues 136–155 (SDEDLDAESDSEGEDEDTQA) the composition is skewed to acidic residues.

This is an uncharacterized protein from Rattus norvegicus (Rat).